We begin with the raw amino-acid sequence, 683 residues long: DNA polymerase alpha-associated DNA helicase A (683 aa).

Residue 229–236 (GPPGTGKT) participates in ATP binding.

Belongs to the DNA2/NAM7 helicase family. Associates with the hexameric DNA polymerase alpha.

The protein resides in the cytoplasm. Its subcellular location is the nucleus. It carries out the reaction ATP + H2O = ADP + phosphate + H(+). DNA polymerase alpha-associated DNA helicase which may be involved in DNA replication. The chain is DNA polymerase alpha-associated DNA helicase A (HCS1) from Saccharomyces cerevisiae (strain ATCC 204508 / S288c) (Baker's yeast).